Consider the following 409-residue polypeptide: Secreted LysM effector Blys2 (409 aa).

The N-terminal stretch at 1–20 is a signal peptide; that stretch reads MTRFTTTLVAALAGANLAAA. The region spanning 24–71 is the LysM 1 domain; it reads YKWRAHAGDTCDSLSSDWSVQVSDFIKWNPSVGANCSNGVTAGQEYCV. Residue Asn58 is glycosylated (N-linked (GlcNAc...) asparagine). A disordered region spans residues 74–111; that stretch reads NGAGSKPTTPPTGSPTTLTTAVTTASSTPTQPTDGAPS. Positions 87 to 106 are enriched in low complexity; it reads SPTTLTTAVTTASSTPTQPT. 4 LysM domains span residues 129–176, 206–253, 283–330, and 357–405; these read AWYK…YVCV, KWYK…FVCV, KFYK…YYCI, and KYYK…YICV.

The protein belongs to the secreted LysM effector family.

It localises to the secreted. Its subcellular location is the cell wall. In terms of biological role, secreted effector that enables the plant pathogenic fungus to manipulate host defenses for successful infection. Required for the full virulence to infect insect hosts. In contrast to Blys5, Blys2 is not able to protect fungal hyphae against the hydrolytic activity of chitinase but plays an important role in evasion of insect immunities. Binds chitin. Coats and protects the cell walls of insect pathogens from host cell recognition. This Beauveria bassiana (strain ARSEF 2860) (White muscardine disease fungus) protein is Secreted LysM effector Blys2.